The sequence spans 372 residues: Cytochrome b (372 aa).

Helical transmembrane passes span 25–45, 69–90, 105–125, and 170–190; these read FGSM…FLAI, WTMQ…YIHI, WLSG…GYVL, and FFAL…IHII. 2 residues coordinate heme b: H75 and H89. Residues H174 and H188 each coordinate heme b. H193 provides a ligand contact to a ubiquinone. Helical transmembrane passes span 218–238, 280–300, 312–332, and 339–358; these read YKDI…MAFA, LGGT…PFTH, LAQM…WTAT, and FILI…IINP.

It belongs to the cytochrome b family. As to quaternary structure, the cytochrome bc1 complex contains 3 respiratory subunits (MT-CYB, CYC1 and UQCRFS1), 2 core proteins (UQCRC1 and UQCRC2) and probably 6 low-molecular weight proteins. Requires heme b as cofactor.

It is found in the mitochondrion inner membrane. Its function is as follows. Component of the ubiquinol-cytochrome c reductase complex (complex III or cytochrome b-c1 complex) that is part of the mitochondrial respiratory chain. The b-c1 complex mediates electron transfer from ubiquinol to cytochrome c. Contributes to the generation of a proton gradient across the mitochondrial membrane that is then used for ATP synthesis. This is Cytochrome b (MT-CYB) from Acanthophis antarcticus (Common death adder).